The sequence spans 248 residues: Triosephosphate isomerase (248 aa).

9-11 (NWK) provides a ligand contact to substrate. The active-site Electrophile is His-94. The active-site Proton acceptor is Glu-166. Residues Gly-172, Ser-212, and 233–234 (GG) each bind substrate.

This sequence belongs to the triosephosphate isomerase family. In terms of assembly, homodimer.

Its subcellular location is the cytoplasm. The catalysed reaction is D-glyceraldehyde 3-phosphate = dihydroxyacetone phosphate. It functions in the pathway carbohydrate biosynthesis; gluconeogenesis. It participates in carbohydrate degradation; glycolysis; D-glyceraldehyde 3-phosphate from glycerone phosphate: step 1/1. In terms of biological role, involved in the gluconeogenesis. Catalyzes stereospecifically the conversion of dihydroxyacetone phosphate (DHAP) to D-glyceraldehyde-3-phosphate (G3P). This chain is Triosephosphate isomerase, found in Clostridium acetobutylicum (strain ATCC 824 / DSM 792 / JCM 1419 / IAM 19013 / LMG 5710 / NBRC 13948 / NRRL B-527 / VKM B-1787 / 2291 / W).